Consider the following 459-residue polypeptide: Zeatin O-glucosyltransferase (459 aa).

The active-site Proton acceptor is His26. Residue His26 coordinates an anthocyanidin. Asp125 serves as the catalytic Charge relay. Positions 148, 335, 337, 352, 355, 356, 357, 360, 376, and 377 each coordinate UDP-alpha-D-glucose.

The protein belongs to the UDP-glycosyltransferase family.

The enzyme catalyses trans-zeatin + UDP-alpha-D-glucose = O-beta-D-glucosyl-trans-zeatin + UDP + H(+). Functionally, may regulate active versus storage forms of cytokinins, and could have an impact on seed growth. Can also use UDP-xylose to catalyze the formation of O-xylosylzeatin but at much lower affinity. The protein is Zeatin O-glucosyltransferase of Phaseolus lunatus (Lima bean).